Here is a 399-residue protein sequence, read N- to C-terminus: MIASKESNSAATPATSAPTLRTTAEIAATAAMGHAPHETFTINLGPQHPAAHGVLRVLMRMDGEWVENAEPVIGYIHRMHEKMGENRTWAKFLPNTSRIDYLSAMHYTHAWVGVVERGLKIEVPERAEYIRVITSELNRIASHQVWWGALLLDLGGFTPILYAFDDREKILDLLEGLCGARLTYCYYRFGGLYNDADDDFLKGTREFVKYMRPRLKMYRDLVTDNVILRQRLTGIGPISADTCRKYGATGPVIRGSGVAYDVRRAEPYSVYPKLQFKIPTYPECDSMARYLVRMDEMEESLNIIEQCLDLIQPGPFMAPKVPRVIRLPAGDYTYAVEAARGRFMVRVVSDGKENPYRARLRTPSFGNLSLFEETSRGMLLPDALAMMGSLDLVIPDIDR.

A disordered region spans residues methionine 1–leucine 20. Over residues serine 9–leucine 20 the composition is skewed to low complexity.

This sequence belongs to the complex I 49 kDa subunit family. In terms of assembly, NDH-1 is composed of 14 different subunits. Subunits NuoB, C, D, E, F, and G constitute the peripheral sector of the complex.

It localises to the cell inner membrane. The enzyme catalyses a quinone + NADH + 5 H(+)(in) = a quinol + NAD(+) + 4 H(+)(out). In terms of biological role, NDH-1 shuttles electrons from NADH, via FMN and iron-sulfur (Fe-S) centers, to quinones in the respiratory chain. The immediate electron acceptor for the enzyme in this species is believed to be ubiquinone. Couples the redox reaction to proton translocation (for every two electrons transferred, four hydrogen ions are translocated across the cytoplasmic membrane), and thus conserves the redox energy in a proton gradient. The polypeptide is NADH-quinone oxidoreductase subunit D 2 (Opitutus terrae (strain DSM 11246 / JCM 15787 / PB90-1)).